The following is a 101-amino-acid chain: Small ribosomal subunit protein uS14 (101 aa).

It belongs to the universal ribosomal protein uS14 family. In terms of assembly, part of the 30S ribosomal subunit. Contacts proteins S3 and S10.

Functionally, binds 16S rRNA, required for the assembly of 30S particles and may also be responsible for determining the conformation of the 16S rRNA at the A site. This Orientia tsutsugamushi (strain Ikeda) (Rickettsia tsutsugamushi) protein is Small ribosomal subunit protein uS14.